A 103-amino-acid chain; its full sequence is UPF0235 protein RL4503 (103 aa).

It belongs to the UPF0235 family.

In Rhizobium johnstonii (strain DSM 114642 / LMG 32736 / 3841) (Rhizobium leguminosarum bv. viciae), this protein is UPF0235 protein RL4503.